We begin with the raw amino-acid sequence, 255 residues long: Leucyl/phenylalanyl-tRNA--protein transferase (255 aa).

It belongs to the L/F-transferase family.

The protein localises to the cytoplasm. It catalyses the reaction N-terminal L-lysyl-[protein] + L-leucyl-tRNA(Leu) = N-terminal L-leucyl-L-lysyl-[protein] + tRNA(Leu) + H(+). The catalysed reaction is N-terminal L-arginyl-[protein] + L-leucyl-tRNA(Leu) = N-terminal L-leucyl-L-arginyl-[protein] + tRNA(Leu) + H(+). It carries out the reaction L-phenylalanyl-tRNA(Phe) + an N-terminal L-alpha-aminoacyl-[protein] = an N-terminal L-phenylalanyl-L-alpha-aminoacyl-[protein] + tRNA(Phe). Its function is as follows. Functions in the N-end rule pathway of protein degradation where it conjugates Leu, Phe and, less efficiently, Met from aminoacyl-tRNAs to the N-termini of proteins containing an N-terminal arginine or lysine. The chain is Leucyl/phenylalanyl-tRNA--protein transferase from Burkholderia pseudomallei (strain 668).